Reading from the N-terminus, the 154-residue chain is Anaerobic ribonucleoside-triphosphate reductase-activating protein (154 aa).

Residues Cys26, Cys30, and Cys33 each coordinate [4Fe-4S] cluster. Residues 32 to 34 (GCY) and Gly74 contribute to the S-adenosyl-L-methionine site.

Belongs to the organic radical-activating enzymes family. In terms of assembly, forms a tetramer composed of two NrdD and two NrdG subunits. Requires [4Fe-4S] cluster as cofactor.

It localises to the cytoplasm. The enzyme catalyses glycyl-[protein] + reduced [flavodoxin] + S-adenosyl-L-methionine = glycin-2-yl radical-[protein] + semiquinone [flavodoxin] + 5'-deoxyadenosine + L-methionine + H(+). Activation of anaerobic ribonucleoside-triphosphate reductase under anaerobic conditions by generation of an organic free radical, using S-adenosylmethionine and reduced flavodoxin as cosubstrates to produce 5'-deoxy-adenosine. This is Anaerobic ribonucleoside-triphosphate reductase-activating protein (nrdG) from Escherichia coli O157:H7.